Consider the following 583-residue polypeptide: Phytoene desaturase (583 aa).

The N-terminal stretch at Met-1–Ala-20 is a signal peptide. A helical transmembrane segment spans residues Ile-531–Pro-551.

The protein belongs to the carotenoid/retinoid oxidoreductase family. The cofactor is NAD(+).

The protein resides in the membrane. It catalyses the reaction 15-cis-phytoene + 5 A = all-trans-3,4-didehydrolycopene + 5 AH2. Its pathway is carotenoid biosynthesis; lycopene biosynthesis. Functionally, phytoene desaturase involved in the carotenoid biosynthesis pathway. Converts phytoene into 3,4-didehydrolycopene via the intermediary of phytofluene, zeta-carotene, neurosporene and lycopene, by introducing up to five double bonds into phytoene. This Phycomyces blakesleeanus (strain ATCC 8743b / DSM 1359 / FGSC 10004 / NBRC 33097 / NRRL 1555) protein is Phytoene desaturase (carB).